We begin with the raw amino-acid sequence, 260 residues long: ELL-associated factor 2 (260 aa).

Residues 17-104 form a necessary for interaction with ELL region; sequence LKLGESFEKQ…TGECRLEKLS (88 aa). Residues 116–126 show a composition bias toward basic and acidic residues; sequence GSSKIQYRKEQ. 2 disordered regions span residues 116–154 and 170–234; these read GSSK…SPAS and MDQM…HNRF. Ser-146, Ser-151, and Ser-154 each carry phosphoserine. Residues 174-192 show a composition bias toward low complexity; the sequence is SSCDSSSDSKSSSSSSSED. The tract at residues 177–260 is necessary for transactivation activity; it reads DSSSDSKSSS…LSESGSDSDD (84 aa). Basic and acidic residues predominate over residues 225 to 234; that stretch reads PDIDASHNRF. The necessary for interaction with TCEA1 and transactivation activity stretch occupies residues 246–260; it reads RNDLQLSESGSDSDD.

The protein belongs to the EAF family. In terms of assembly, isoform 1 and isoform 2 interact with TCEA1. Component of the super elongation complex (SEC), at least composed of EAF1, EAF2, CDK9, MLLT3/AF9, AFF (AFF1 or AFF4), the P-TEFb complex and ELL (ELL, ELL2 or ELL3). Interacts with ELL and ELL2. In terms of tissue distribution, expressed in heart, brain, placenta, lung, skeletal muscle, kidney, pancreas, spleen, prostate, testis, small intestine, colon, adrenal, bone marrow, lymph node, spinal gland, stomach, thyroid, trachea, thymus, liver and leukocytes.

The protein resides in the nucleus speckle. Its function is as follows. Acts as a transcriptional transactivator of TCEA1 elongation activity. Acts as a transcriptional transactivator of ELL and ELL2 elongation activities. Potent inducer of apoptosis in prostatic and non-prostatic cell lines. Inhibits prostate tumor growth in vivo. This chain is ELL-associated factor 2 (EAF2), found in Homo sapiens (Human).